The sequence spans 155 residues: uncharacterized protein (155 aa).

In terms of domain architecture, HTH asnC-type spans 4-65; the sequence is IDEVDEIILR…IIDHSFLGEF (62 aa). Residues 23–42 constitute a DNA-binding region (H-T-H motif); the sequence is LTELSRKVGLTPAAIKNRVE.

This is an uncharacterized protein from Pyrococcus furiosus (strain ATCC 43587 / DSM 3638 / JCM 8422 / Vc1).